The sequence spans 512 residues: ATP synthase subunit alpha (512 aa).

169-176 (GDRQTGKT) is a binding site for ATP.

The protein belongs to the ATPase alpha/beta chains family. As to quaternary structure, F-type ATPases have 2 components, CF(1) - the catalytic core - and CF(0) - the membrane proton channel. CF(1) has five subunits: alpha(3), beta(3), gamma(1), delta(1), epsilon(1). CF(0) has three main subunits: a(1), b(2) and c(9-12). The alpha and beta chains form an alternating ring which encloses part of the gamma chain. CF(1) is attached to CF(0) by a central stalk formed by the gamma and epsilon chains, while a peripheral stalk is formed by the delta and b chains.

Its subcellular location is the cell inner membrane. It catalyses the reaction ATP + H2O + 4 H(+)(in) = ADP + phosphate + 5 H(+)(out). Produces ATP from ADP in the presence of a proton gradient across the membrane. The alpha chain is a regulatory subunit. This is ATP synthase subunit alpha from Orientia tsutsugamushi (strain Boryong) (Rickettsia tsutsugamushi).